Here is a 104-residue protein sequence, read N- to C-terminus: Small ribosomal subunit protein uS10 (104 aa).

It belongs to the universal ribosomal protein uS10 family. In terms of assembly, part of the 30S ribosomal subunit.

Functionally, involved in the binding of tRNA to the ribosomes. This chain is Small ribosomal subunit protein uS10, found in Nitrosococcus oceani (strain ATCC 19707 / BCRC 17464 / JCM 30415 / NCIMB 11848 / C-107).